Consider the following 290-residue polypeptide: Alpha-mannosidase (290 aa).

The active-site Nucleophile is the aspartate 17. Asparagine 64 carries N-linked (GlcNAc...) asparagine glycosylation.

It belongs to the glycosyl hydrolase 38 family. Dimer. Zn(2+) is required as a cofactor.

The catalysed reaction is Hydrolysis of terminal, non-reducing alpha-D-mannose residues in alpha-D-mannosides.. With respect to regulation, inhibited by swainsonine but not by 1-desoxymannojirimycin. Liberates mannose from p-nitrophenyl-alpha-D-mannoside. The chain is Alpha-mannosidase from Lablab purpureus (Hyacinth bean).